The chain runs to 1011 residues: Poly [ADP-ribose] polymerase 1 (1011 aa).

2 consecutive PARP-type zinc fingers follow at residues 9-91 (YRAE…ETGA) and 113-203 (FAAE…PATK). Zn(2+) is bound by residues Cys-21, Cys-24, His-53, Cys-56, Cys-125, Cys-128, His-159, and Cys-162. Residues 198–235 (QLPATKTEGKRKGEEVDGNVVAKKKSRKEKEKESKQEK) are disordered. 2 short sequence motifs (nuclear localization signal) span residues 207 to 209 (KRK) and 220 to 225 (KKKSRK). The PADR1 zinc-binding domain maps to 224-358 (RKEKEKESKQ…CKKQDRIFPP (135 aa)). The span at 225 to 235 (KEKEKESKQEK) shows a compositional bias: basic and acidic residues. The tract at residues 289-331 (GALLPCEECKGQFVFKSDAYYCSGDITAWTKCVAKTQTPNRKD) is zinc ribbon. Cys-294, Cys-297, Cys-310, and Cys-320 together coordinate Zn(2+). The interval 359–378 (EAATVNSAPPPPASAPLTET) is disordered. An automodification domain region spans residues 371-522 (ASAPLTETVT…PSKSEKKMKL (152 aa)). One can recognise a BRCT domain in the interval 382 to 473 (PQDKPLTNMK…KGFQELLSLH (92 aa)). PolyADP-ribosyl glutamic acid is present on residues Glu-403, Glu-404, Glu-410, Glu-411, Glu-432, Glu-434, Glu-441, Glu-442, Glu-453, Glu-454, Glu-468, Glu-481, Glu-485, Glu-488, Glu-509, Glu-510, and Glu-517. Residues 496–519 (SKPANMKSAGKVKEEQGPSKSEKK) form a disordered region. The span at 506-519 (KVKEEQGPSKSEKK) shows a compositional bias: basic and acidic residues. Residues 539–635 (SAHVFEKGGK…KNFTKYPKKF (97 aa)) enclose the WGR domain. One can recognise a PARP alpha-helical domain in the interval 659-776 (KSKLAKPIQD…DIEVAYSLLR (118 aa)). The PARP catalytic domain maps to 785-1011 (DPIDINYEKL…LKFNYKTSLW (227 aa)). Residues 859–861 (HGS), Gly-868, Arg-875, and Ser-901 each bind NAD(+). The active-site For poly [ADP-ribose] polymerase activity is the Glu-985.

The protein belongs to the ARTD/PARP family. Homodimer; PARP-type zinc-fingers from separate parp1 molecules form a dimer module that specifically recognizes DNA strand breaks. In terms of processing, poly-ADP-ribosylated on serine, glutamate and aspartate residues by autocatalysis. Auto-ADP-ribosylation on serine takes place following interaction with HPF1. Auto poly-ADP-ribosylation on serine residues promotes its dissociation from chromatin.

Its subcellular location is the chromosome. The protein localises to the nucleus. It localises to the nucleolus. It is found in the cytoplasm. The protein resides in the cytosol. The enzyme catalyses NAD(+) + (ADP-D-ribosyl)n-acceptor = nicotinamide + (ADP-D-ribosyl)n+1-acceptor + H(+).. The catalysed reaction is L-seryl-[protein] + NAD(+) = O-(ADP-D-ribosyl)-L-seryl-[protein] + nicotinamide + H(+). It catalyses the reaction L-aspartyl-[protein] + NAD(+) = 4-O-(ADP-D-ribosyl)-L-aspartyl-[protein] + nicotinamide. It carries out the reaction L-glutamyl-[protein] + NAD(+) = 5-O-(ADP-D-ribosyl)-L-glutamyl-[protein] + nicotinamide. The enzyme catalyses L-tyrosyl-[protein] + NAD(+) = O-(ADP-D-ribosyl)-L-tyrosyl-[protein] + nicotinamide + H(+). The catalysed reaction is L-histidyl-[protein] + NAD(+) = N(tele)-(ADP-D-ribosyl)-L-histidyl-[protein] + nicotinamide + H(+). With respect to regulation, ADP-ribosyltransferase activity is regulated via an allosteric activation mechanism. In absence of activation signal, parp1 is autoinhibited by the PARP alpha-helical domain (also named HD region), which prevents effective NAD(+)-binding. Activity is highly stimulated by signals, such as DNA strand breaks. Binding to damaged DNA unfolds the PARP alpha-helical domain, relieving autoinhibition. Poly-ADP-ribosyltransferase activity is tightly regulated and parp1 is removed from damaged chromatin following initial poly-ADP-ribosylation of chromatin to avoid prolonged residence (trapping) that has cytotoxic consequences. A number of factors or post-translational modifications (auto-poly-ADP-ribosylation) promote parp1 removal from chromatin. Poly-ADP-ribosyltransferase that mediates poly-ADP-ribosylation of proteins and plays a key role in DNA repair. Mediates glutamate, aspartate, serine, histidine or tyrosine ADP-ribosylation of proteins: the ADP-D-ribosyl group of NAD(+) is transferred to the acceptor carboxyl group of target residues and further ADP-ribosyl groups are transferred to the 2'-position of the terminal adenosine moiety, building up a polymer with an average chain length of 20-30 units. Serine ADP-ribosylation of proteins constitutes the primary form of ADP-ribosylation of proteins in response to DNA damage. Specificity for the different amino acids is conferred by interacting factors, such as hpf1 and nmnat1. Following interaction with hpf1, catalyzes serine ADP-ribosylation of target proteins; hpf1 confers serine specificity by completing the parp1 active site. Also catalyzes tyrosine ADP-ribosylation of target proteins following interaction with hpf1. Following interaction with nmnat1, catalyzes glutamate and aspartate ADP-ribosylation of target proteins; nmnat1 confers glutamate and aspartate specificity. Parp1 initiates the repair of DNA breaks: recognizes and binds DNA breaks within chromatin and recruits hpf1, licensing serine ADP-ribosylation of target proteins, such as histones (H2BS6ADPr and H3S10ADPr), thereby promoting decompaction of chromatin and the recruitment of repair factors leading to the reparation of DNA strand breaks. In addition to base excision repair (BER) pathway, also involved in double-strand breaks (DSBs) repair. Mediates the poly-ADP-ribosylation of a number of proteins. In addition to proteins, also able to ADP-ribosylate DNA: catalyzes ADP-ribosylation of DNA strand break termini containing terminal phosphates and a 2'-OH group in single- and double-stranded DNA, respectively. Parp1-mediated DNA repair in neurons plays a role in sleep: senses DNA damage in neurons and promotes sleep, facilitating efficient DNA repair. In addition to DNA repair, also involved in other processes, such as transcription regulation, programmed cell death, membrane repair, adipogenesis and innate immunity. Acts as a repressor of transcription: binds to nucleosomes and modulates chromatin structure in a manner similar to histone H1, thereby altering RNA polymerase II. Acts both as a positive and negative regulator of transcription elongation, depending on the context. Poly-ADP-ribose chains generated by parp1 also play a role in poly-ADP-ribose-dependent cell death, a process named parthanatos. Also acts as a negative regulator of the cGAS-STING pathway by mediating poly-ADP-ribosylation and inactivation of cgas. Acts as a negative regulator of adipogenesis by catalyzing poly ADP-ribosylation of histone H2B on 'Glu-35' (H2BE35ADPr). The chain is Poly [ADP-ribose] polymerase 1 (PARP1) from Gallus gallus (Chicken).